The chain runs to 422 residues: 5-methylthioadenosine/S-adenosylhomocysteine deaminase 1 (422 aa).

2 residues coordinate Zn(2+): His56 and His58. Residues Glu85 and His174 each contribute to the substrate site. His201 contributes to the Zn(2+) binding site. Positions 204 and 290 each coordinate substrate. A Zn(2+)-binding site is contributed by Asp290.

The protein belongs to the metallo-dependent hydrolases superfamily. MTA/SAH deaminase family. Zn(2+) serves as cofactor.

It catalyses the reaction S-adenosyl-L-homocysteine + H2O + H(+) = S-inosyl-L-homocysteine + NH4(+). It carries out the reaction S-methyl-5'-thioadenosine + H2O + H(+) = S-methyl-5'-thioinosine + NH4(+). Its function is as follows. Catalyzes the deamination of 5-methylthioadenosine and S-adenosyl-L-homocysteine into 5-methylthioinosine and S-inosyl-L-homocysteine, respectively. Is also able to deaminate adenosine. This is 5-methylthioadenosine/S-adenosylhomocysteine deaminase 1 from Archaeoglobus fulgidus (strain ATCC 49558 / DSM 4304 / JCM 9628 / NBRC 100126 / VC-16).